An 81-amino-acid polypeptide reads, in one-letter code: High-potential iron-sulfur protein (81 aa).

4 residues coordinate [4Fe-4S] cluster: cysteine 43, cysteine 46, cysteine 59, and cysteine 73.

Belongs to the high-potential iron-sulfur protein (HiPIP) family. In terms of assembly, homodimer.

Its function is as follows. Specific class of high-redox-potential 4Fe-4S ferredoxins. Functions in anaerobic electron transport in most purple and in some other photosynthetic bacteria and in at least one genus (Paracoccus) of halophilic, denitrifying bacteria. In Thiococcus pfennigii (Thiocapsa pfennigii), this protein is High-potential iron-sulfur protein (hip).